Reading from the N-terminus, the 200-residue chain is Dephospho-CoA kinase (200 aa).

The 197-residue stretch at 4–200 (TIGLTGSVAT…TFIERFVNNK (197 aa)) folds into the DPCK domain. 12–17 (ATGKST) is a binding site for ATP.

Belongs to the CoaE family.

It is found in the cytoplasm. It carries out the reaction 3'-dephospho-CoA + ATP = ADP + CoA + H(+). It functions in the pathway cofactor biosynthesis; coenzyme A biosynthesis; CoA from (R)-pantothenate: step 5/5. Catalyzes the phosphorylation of the 3'-hydroxyl group of dephosphocoenzyme A to form coenzyme A. The chain is Dephospho-CoA kinase from Listeria innocua serovar 6a (strain ATCC BAA-680 / CLIP 11262).